A 398-amino-acid chain; its full sequence is ATP-dependent RNA helicase eIF4A (398 aa).

A Q motif motif is present at residues 25-53 (DSFDSMELKPELLRGIYAYGFERPSAIQQ). Positions 56 to 226 (ILPIIKGNDV…TKFMRDPVRI (171 aa)) constitute a Helicase ATP-binding domain. An ATP-binding site is contributed by 69–76 (AQSGTGKT). The DEAD box signature appears at 174–177 (DEAD). The 162-residue stretch at 237–398 (GIKQFYIAVE…EMPMNVADLI (162 aa)) folds into the Helicase C-terminal domain.

Belongs to the DEAD box helicase family. eIF4A subfamily. Component of the eIF4F complex, which composition varies with external and internal environmental conditions. It is composed of at least eIF4A, eIF4E and eIF4G.

Its subcellular location is the cytoplasm. The catalysed reaction is ATP + H2O = ADP + phosphate + H(+). In terms of biological role, ATP-dependent RNA helicase which is a subunit of the eIF4F complex involved in cap recognition and is required for mRNA binding to ribosome. In the current model of translation initiation, eIF4A unwinds RNA secondary structures in the 5'-UTR of mRNAs which is necessary to allow efficient binding of the small ribosomal subunit, and subsequent scanning for the initiator codon. This chain is ATP-dependent RNA helicase eIF4A (tif1), found in Neosartorya fischeri (strain ATCC 1020 / DSM 3700 / CBS 544.65 / FGSC A1164 / JCM 1740 / NRRL 181 / WB 181) (Aspergillus fischerianus).